The sequence spans 540 residues: Chaperonin GroEL (540 aa).

ATP is bound by residues 29–32 (TLGP), 86–90 (DGTTT), Gly-413, 476–478 (NAA), and Asp-492.

It belongs to the chaperonin (HSP60) family. Forms a cylinder of 14 subunits composed of two heptameric rings stacked back-to-back. Interacts with the co-chaperonin GroES.

It is found in the cytoplasm. The catalysed reaction is ATP + H2O + a folded polypeptide = ADP + phosphate + an unfolded polypeptide.. Functionally, together with its co-chaperonin GroES, plays an essential role in assisting protein folding. The GroEL-GroES system forms a nano-cage that allows encapsulation of the non-native substrate proteins and provides a physical environment optimized to promote and accelerate protein folding. The polypeptide is Chaperonin GroEL (Streptococcus pneumoniae (strain P1031)).